Here is a 144-residue protein sequence, read N- to C-terminus: Small ribosomal subunit protein eS19A (144 aa).

The interval Val-83–Lys-102 is disordered.

This sequence belongs to the eukaryotic ribosomal protein eS19 family. As to quaternary structure, component of the small ribosomal subunit (SSU). Mature yeast ribosomes consist of a small (40S) and a large (60S) subunit. The 40S small subunit contains 1 molecule of ribosomal RNA (18S rRNA) and at least 33 different proteins. The large 60S subunit contains 3 rRNA molecules (25S, 5.8S and 5S rRNA) and at least 46 different proteins.

It localises to the cytoplasm. It is found in the nucleus. Its subcellular location is the nucleolus. In terms of biological role, component of the ribosome, a large ribonucleoprotein complex responsible for the synthesis of proteins in the cell. The small ribosomal subunit (SSU) binds messenger RNAs (mRNAs) and translates the encoded message by selecting cognate aminoacyl-transfer RNA (tRNA) molecules. The large subunit (LSU) contains the ribosomal catalytic site termed the peptidyl transferase center (PTC), which catalyzes the formation of peptide bonds, thereby polymerizing the amino acids delivered by tRNAs into a polypeptide chain. The nascent polypeptides leave the ribosome through a tunnel in the LSU and interact with protein factors that function in enzymatic processing, targeting, and the membrane insertion of nascent chains at the exit of the ribosomal tunnel. eS19 is required for proper maturation of the small (40S) ribosomal subunit. Binds to 40S pre-ribosomal particles, probably required after association of NOC4 but before association of ENP1, TSR1 and RIO2 with 20/21S pre-rRNA. This is Small ribosomal subunit protein eS19A (rps1901) from Schizosaccharomyces pombe (strain 972 / ATCC 24843) (Fission yeast).